The sequence spans 101 residues: Fructose-bisphosphate aldolase (101 aa).

Lys-11 acts as the Schiff-base intermediate with dihydroxyacetone-P in catalysis.

Belongs to the class I fructose-bisphosphate aldolase family.

The enzyme catalyses beta-D-fructose 1,6-bisphosphate = D-glyceraldehyde 3-phosphate + dihydroxyacetone phosphate. The protein operates within carbohydrate degradation; glycolysis; D-glyceraldehyde 3-phosphate and glycerone phosphate from D-glucose: step 4/4. The sequence is that of Fructose-bisphosphate aldolase from Lymnaea stagnalis (Great pond snail).